The following is a 117-amino-acid chain: Large ribosomal subunit protein bL17 (117 aa).

The protein belongs to the bacterial ribosomal protein bL17 family. In terms of assembly, part of the 50S ribosomal subunit. Contacts protein L32.

The chain is Large ribosomal subunit protein bL17 from Campylobacter lari (strain RM2100 / D67 / ATCC BAA-1060).